The primary structure comprises 506 residues: ATP synthase subunit alpha (506 aa).

169 to 176 contacts ATP; sequence GDRQTGKT.

Belongs to the ATPase alpha/beta chains family. As to quaternary structure, F-type ATPases have 2 components, CF(1) - the catalytic core - and CF(0) - the membrane proton channel. CF(1) has five subunits: alpha(3), beta(3), gamma(1), delta(1), epsilon(1). CF(0) has three main subunits: a(1), b(2) and c(9-12). The alpha and beta chains form an alternating ring which encloses part of the gamma chain. CF(1) is attached to CF(0) by a central stalk formed by the gamma and epsilon chains, while a peripheral stalk is formed by the delta and b chains.

Its subcellular location is the cell membrane. It carries out the reaction ATP + H2O + 4 H(+)(in) = ADP + phosphate + 5 H(+)(out). In terms of biological role, produces ATP from ADP in the presence of a proton gradient across the membrane. The alpha chain is a regulatory subunit. The chain is ATP synthase subunit alpha from Lawsonia intracellularis (strain PHE/MN1-00).